Consider the following 233-residue polypeptide: DnaA regulatory inactivator Hda (233 aa).

It belongs to the DnaA family. HdA subfamily. In terms of assembly, the active form seems to be an ADP-bound monomer. Forms the RIDA complex (regulatory inactivation of DnaA) of ATP-DnaA, ADP-Hda and the DNA-loaded beta sliding clamp (dnaN).

In terms of biological role, mediates the interaction of DNA replication initiator protein DnaA with DNA polymerase subunit beta sliding clamp (dnaN). Stimulates hydrolysis of ATP-DnaA to ADP-DnaA, rendering DnaA inactive for reinitiation, a process called regulatory inhibition of DnaA or RIDA. In Photorhabdus laumondii subsp. laumondii (strain DSM 15139 / CIP 105565 / TT01) (Photorhabdus luminescens subsp. laumondii), this protein is DnaA regulatory inactivator Hda.